Reading from the N-terminus, the 126-residue chain is MLLTLLKCKLHKATVTHSELEYEGSCAIDGDLLDAAGILPYEQIQIYNIANGERFTTYAIRAEAGSRVISVNGAAAHKANPGDRVIICAYGQLPREEAARFHPRLVYLDADNRIVRTGSDIPVQAA.

The active-site Schiff-base intermediate with substrate; via pyruvic acid is S25. S25 bears the Pyruvic acid (Ser) mark. Residue T57 coordinates substrate. The active-site Proton donor is Y58. A substrate-binding site is contributed by G73–A75.

It belongs to the PanD family. Heterooctamer of four alpha and four beta subunits. Pyruvate is required as a cofactor. Post-translationally, is synthesized initially as an inactive proenzyme, which is activated by self-cleavage at a specific serine bond to produce a beta-subunit with a hydroxyl group at its C-terminus and an alpha-subunit with a pyruvoyl group at its N-terminus.

It is found in the cytoplasm. The enzyme catalyses L-aspartate + H(+) = beta-alanine + CO2. It functions in the pathway cofactor biosynthesis; (R)-pantothenate biosynthesis; beta-alanine from L-aspartate: step 1/1. Catalyzes the pyruvoyl-dependent decarboxylation of aspartate to produce beta-alanine. This chain is Aspartate 1-decarboxylase, found in Thioalkalivibrio sulfidiphilus (strain HL-EbGR7).